The sequence spans 88 residues: Elongation factor 1-beta (88 aa).

The protein belongs to the EF-1-beta/EF-1-delta family.

Promotes the exchange of GDP for GTP in EF-1-alpha/GDP, thus allowing the regeneration of EF-1-alpha/GTP that could then be used to form the ternary complex EF-1-alpha/GTP/AAtRNA. This is Elongation factor 1-beta from Methanosphaera stadtmanae (strain ATCC 43021 / DSM 3091 / JCM 11832 / MCB-3).